We begin with the raw amino-acid sequence, 948 residues long: Valine--tRNA ligase (948 aa).

A 'HIGH' region motif is present at residues 40–50 (PNVTGSLHMGH). The short motif at 551 to 555 (KMSKS) is the 'KMSKS' region element. Position 554 (K554) interacts with ATP. A coiled-coil region spans residues 879-945 (LIDKGAELAR…GKLAEQHARI (67 aa)).

Belongs to the class-I aminoacyl-tRNA synthetase family. ValS type 1 subfamily. Monomer.

The protein resides in the cytoplasm. The enzyme catalyses tRNA(Val) + L-valine + ATP = L-valyl-tRNA(Val) + AMP + diphosphate. Catalyzes the attachment of valine to tRNA(Val). As ValRS can inadvertently accommodate and process structurally similar amino acids such as threonine, to avoid such errors, it has a 'posttransfer' editing activity that hydrolyzes mischarged Thr-tRNA(Val) in a tRNA-dependent manner. The sequence is that of Valine--tRNA ligase from Pseudomonas syringae pv. tomato (strain ATCC BAA-871 / DC3000).